The following is a 119-amino-acid chain: Circadian clock oscillator protein KaiB (119 aa).

Belongs to the KaiB family. May undergo a major conformational rearrangment; in the free state forms homooligomers. When bound to KaiC switches to a monomeric thioredoxin-fold (KaiB(fs)). The active oscillator complex is probably KaiC(6):KaiB(6).

In terms of biological role, component of the KaiBC clock protein complex, which constitutes the main circadian regulator in cyanobacteria; it may modify the ATPase activity of KaiC. May be a metamorphic protein which reversibly switches between an inactive tetrameric fold and a rare, thioredoxin-like monomeric fold (KaiB(fs)). KaiB(fs) binds phospho-KaiC, and perhaps clock output effectors. The polypeptide is Circadian clock oscillator protein KaiB (Prochlorococcus marinus (strain MIT 9313)).